Consider the following 117-residue polypeptide: Large ribosomal subunit protein uL18 (117 aa).

The protein belongs to the universal ribosomal protein uL18 family. In terms of assembly, part of the 50S ribosomal subunit; part of the 5S rRNA/L5/L18/L25 subcomplex. Contacts the 5S and 23S rRNAs.

Functionally, this is one of the proteins that bind and probably mediate the attachment of the 5S RNA into the large ribosomal subunit, where it forms part of the central protuberance. This is Large ribosomal subunit protein uL18 from Aeromonas salmonicida (strain A449).